A 447-amino-acid chain; its full sequence is Elongation factor 1-alpha (447 aa).

One can recognise a tr-type G domain in the interval 5–230 (KIHISIVVIG…DQISEPKRPS (226 aa)). The tract at residues 14-21 (GHVDSGKS) is G1. GTP is bound at residue 14–21 (GHVDSGKS). Lys55 carries the N6,N6-dimethyllysine modification. Residues 70–74 (GITID) are G2. Position 79 is an N6,N6,N6-trimethyllysine (Lys79). Residues 91–94 (DAPG) are G3. Residues 91 to 95 (DAPGH) and 153 to 156 (NKMD) contribute to the GTP site. Residues 153–156 (NKMD) form a G4 region. Lys187 carries the N6,N6,N6-trimethyllysine modification. The G5 stretch occupies residues 194–196 (SGF). The residue at position 261 (Lys261) is an N6-methyllysine. Glu289 bears the 5-glutamyl glycerylphosphorylethanolamine mark. Residue Lys306 is modified to N6,N6,N6-trimethyllysine. 5-glutamyl glycerylphosphorylethanolamine is present on Glu362. N6,N6,N6-trimethyllysine is present on Lys396.

This sequence belongs to the TRAFAC class translation factor GTPase superfamily. Classic translation factor GTPase family. EF-Tu/EF-1A subfamily.

The protein resides in the cytoplasm. This protein promotes the GTP-dependent binding of aminoacyl-tRNA to the A-site of ribosomes during protein biosynthesis. The sequence is that of Elongation factor 1-alpha from Daucus carota (Wild carrot).